A 200-amino-acid chain; its full sequence is NAD(P)H dehydrogenase (quinone) (200 aa).

One can recognise a Flavodoxin-like domain in the interval 4 to 191; that stretch reads VLVLYYSSYG…DIARYQGKHV (188 aa). Residues 10 to 15 and 79 to 81 contribute to the FMN site; these read SSYGHV and TRF. Residue tyrosine 12 coordinates NAD(+). Residue tryptophan 99 participates in substrate binding. FMN is bound by residues 114-120 and histidine 135; that span reads STGTQHG.

Belongs to the WrbA family. FMN serves as cofactor.

The catalysed reaction is a quinone + NADH + H(+) = a quinol + NAD(+). It carries out the reaction a quinone + NADPH + H(+) = a quinol + NADP(+). The protein is NAD(P)H dehydrogenase (quinone) of Burkholderia cenocepacia (strain HI2424).